Here is a 221-residue protein sequence, read N- to C-terminus: Protein DEHYDRATION-INDUCED 19 homolog 2 (221 aa).

2 disordered regions span residues 1–24 (MEDDMWCVSSSGSSRSYRSETAAK) and 162–193 (VLPDSSVEDKNPIKDSSAAKEGTSSCPLSDSD).

This sequence belongs to the Di19 family. Post-translationally, not phosphorylated in vitro by CPK3 or CPK11. In terms of tissue distribution, expressed in seedlings, roots, leaves, stems, flowers and siliques.

The protein resides in the cytoplasm. It localises to the nucleus. The chain is Protein DEHYDRATION-INDUCED 19 homolog 2 (DI19-2) from Arabidopsis thaliana (Mouse-ear cress).